The chain runs to 465 residues: MASNVRTRFAPSPTGYLHIGGARTALFSWAFARRHGGTFILRIEDTDVARSTPAAVQAILDGMSWLGLDADEGPFYQMQRMDRYKAVIREMLAAGSAYHCYASTEELDRMREEQRARGEKPRYDGRWRPEPGKVLPAMPAGVEPVVRFRNPVEGVVAWDDLVKGRIEIANAELDDLVIARADGTPTYNFCVVVDDCDMGITHVIRGDDHVNNTPRQINILRALGAEVPLYAHLSMILGDDGTKLSKRHGAVSVMQYFDDGYLPEAVINYLARLGWSHGDDEIFTREQFVTWFDLDHITPSAAQFNTEKLNWLNAHYIKHSDDARLAADVASRLARRGVDPEAGPRLESVVALYKERVANLNELADAAELYCVAVHPSDELLAQHLTDAGRAALASLKARLADVAWEKPGLNQAIKDTMAEHSLKMPQVAIPLRVATLGVAQTPAIDAVLEVLGRERVLMRIGRYI.

The 'HIGH' region signature appears at 11-21; that stretch reads PSPTGYLHIGG. The short motif at 243 to 247 is the 'KMSKS' region element; the sequence is KLSKR. Position 246 (Lys246) interacts with ATP.

The protein belongs to the class-I aminoacyl-tRNA synthetase family. Glutamate--tRNA ligase type 1 subfamily. As to quaternary structure, monomer.

The protein resides in the cytoplasm. The catalysed reaction is tRNA(Glu) + L-glutamate + ATP = L-glutamyl-tRNA(Glu) + AMP + diphosphate. In terms of biological role, catalyzes the attachment of glutamate to tRNA(Glu) in a two-step reaction: glutamate is first activated by ATP to form Glu-AMP and then transferred to the acceptor end of tRNA(Glu). The chain is Glutamate--tRNA ligase from Aromatoleum aromaticum (strain DSM 19018 / LMG 30748 / EbN1) (Azoarcus sp. (strain EbN1)).